The chain runs to 343 residues: Mediator of RNA polymerase II transcription subunit 2 (343 aa).

Disordered regions lie at residues 105-141 and 252-277; these read KQQQ…AQQL and STNE…ISSN. Basic and acidic residues predominate over residues 107–132; the sequence is QQEEEQRRKHQAELEKNKRQQEHDAA. The span at 252-264 shows a compositional bias: polar residues; the sequence is STNEASTNNRNND.

Belongs to the Mediator complex subunit 2 family. In terms of assembly, component of the Mediator complex.

Its subcellular location is the nucleus. Component of the Mediator complex, a coactivator involved in the regulated transcription of nearly all RNA polymerase II-dependent genes. Mediator functions as a bridge to convey information from gene-specific regulatory proteins to the basal RNA polymerase II transcription machinery. Mediator is recruited to promoters by direct interactions with regulatory proteins and serves as a scaffold for the assembly of a functional preinitiation complex with RNA polymerase II and the general transcription factors. This chain is Mediator of RNA polymerase II transcription subunit 2 (MED2), found in Eremothecium gossypii (strain ATCC 10895 / CBS 109.51 / FGSC 9923 / NRRL Y-1056) (Yeast).